The sequence spans 205 residues: Ribonuclease HII (205 aa).

The RNase H type-2 domain maps to 13 to 205 (TIVAGVDEVG…APVKYMLSMC (193 aa)). Residues Asp19, Glu20, and Asp114 each coordinate a divalent metal cation.

This sequence belongs to the RNase HII family. It depends on Mn(2+) as a cofactor. Mg(2+) is required as a cofactor.

Its subcellular location is the cytoplasm. The catalysed reaction is Endonucleolytic cleavage to 5'-phosphomonoester.. In terms of biological role, endonuclease that specifically degrades the RNA of RNA-DNA hybrids. The polypeptide is Ribonuclease HII (Blochmanniella floridana).